The following is an 80-amino-acid chain: RNA-binding protein Hfq (80 aa).

The Sm domain occupies 7–67 (ESFLNTARKK…ITTIVPHERL (61 aa)).

This sequence belongs to the Hfq family. As to quaternary structure, homohexamer.

Functionally, RNA chaperone that binds small regulatory RNA (sRNAs) and mRNAs to facilitate mRNA translational regulation in response to envelope stress, environmental stress and changes in metabolite concentrations. Also binds with high specificity to tRNAs. The chain is RNA-binding protein Hfq from Aquifex aeolicus (strain VF5).